Consider the following 365-residue polypeptide: Caffeic acid 3-O-methyltransferase (365 aa).

Asn-131 serves as a coordination point for (E)-ferulate. Positions 208, 231, 251, 252, 264, and 265 each coordinate S-adenosyl-L-homocysteine. His-269 acts as the Proton acceptor in catalysis. Asp-270 contacts (E)-5-hydroxyferulate. Catalysis depends on residues Glu-297 and Glu-329.

It belongs to the class I-like SAM-binding methyltransferase superfamily. Cation-independent O-methyltransferase family. COMT subfamily. As to quaternary structure, homodimer. More abundant in roots and stems.

It carries out the reaction (E)-caffeate + S-adenosyl-L-methionine = (E)-ferulate + S-adenosyl-L-homocysteine + H(+). It catalyses the reaction (E)-5-hydroxyferulate + S-adenosyl-L-methionine = (E)-sinapate + S-adenosyl-L-homocysteine + H(+). Its pathway is aromatic compound metabolism; phenylpropanoid biosynthesis. Catalyzes the conversion of caffeic acid to ferulic acid and of 5-hydroxyferulic acid to sinapic acid. The resulting products may subsequently be converted to the corresponding alcohols that are incorporated into lignins. The polypeptide is Caffeic acid 3-O-methyltransferase (Medicago sativa (Alfalfa)).